Here is a 347-residue protein sequence, read N- to C-terminus: Probable dual-specificity RNA methyltransferase RlmN (347 aa).

The active-site Proton acceptor is E90. The 231-residue stretch at Y96–D326 folds into the Radical SAM core domain. Cysteines 103 and 331 form a disulfide. [4Fe-4S] cluster contacts are provided by C110, C114, and C117. Residues G157–E158, S189, S212–H214, and N288 contribute to the S-adenosyl-L-methionine site. C331 serves as the catalytic S-methylcysteine intermediate.

This sequence belongs to the radical SAM superfamily. RlmN family. Requires [4Fe-4S] cluster as cofactor.

The protein localises to the cytoplasm. It catalyses the reaction adenosine(2503) in 23S rRNA + 2 reduced [2Fe-2S]-[ferredoxin] + 2 S-adenosyl-L-methionine = 2-methyladenosine(2503) in 23S rRNA + 5'-deoxyadenosine + L-methionine + 2 oxidized [2Fe-2S]-[ferredoxin] + S-adenosyl-L-homocysteine. It carries out the reaction adenosine(37) in tRNA + 2 reduced [2Fe-2S]-[ferredoxin] + 2 S-adenosyl-L-methionine = 2-methyladenosine(37) in tRNA + 5'-deoxyadenosine + L-methionine + 2 oxidized [2Fe-2S]-[ferredoxin] + S-adenosyl-L-homocysteine. Its function is as follows. Specifically methylates position 2 of adenine 2503 in 23S rRNA and position 2 of adenine 37 in tRNAs. In Clostridium botulinum (strain Alaska E43 / Type E3), this protein is Probable dual-specificity RNA methyltransferase RlmN.